We begin with the raw amino-acid sequence, 258 residues long: Short-chain dehydrogenase/reductase aba4 (258 aa).

The NADP(+) site is built by Ile20, Asp66, and Lys130. Catalysis depends on proton donor residues Ser146 and Tyr160. Tyr160, Lys164, Ile193, and Thr195 together coordinate NADP(+). Lys164 serves as the catalytic Lowers pKa of active site Tyr.

The protein belongs to the short-chain dehydrogenases/reductases (SDR) family.

It functions in the pathway hormone biosynthesis. Functionally, short-chain dehydrogenase/reductase; part of the gene cluster that mediates the biosynthesis of abscisic acid (ABA), a phytohormone that acts antagonistically toward salicylic acid (SA), jasmonic acid (JA) and ethylene (ETH) signaling, to impede plant defense responses. The first step of the pathway catalyzes the reaction from farnesyl diphosphate to alpha-ionylideneethane performed by the alpha-ionylideneethane synthase aba3 via a three-step reaction mechanism involving 2 neutral intermediates, beta-farnesene and allofarnesene. The cytochrome P450 monooxygenase aba1 might then be involved in the conversion of alpha-ionylideneethane to alpha-ionylideneacetic acid. Alpha-ionylideneacetic acid is further converted to abscisic acid in 2 steps involving the cytochrome P450 monooxygenase aba2 and the short-chain dehydrogenase/reductase aba4, via the intermediates 1'-deoxy-ABA or 1',4'-trans-diol-ABA, depending on the order of action of these 2 enzymes. Aba2 is responsible for the hydroxylation of carbon atom C-1' and aba4 might be involved in the oxidation of the C-4' carbon atom. The chain is Short-chain dehydrogenase/reductase aba4 from Botryotinia fuckeliana (strain B05.10) (Noble rot fungus).